Reading from the N-terminus, the 385-residue chain is Heptahelical transmembrane protein 4 (385 aa).

Residues 1-12 (MGDEAEIKEHLK) show a composition bias toward basic and acidic residues. Positions 1 to 22 (MGDEAEIKEHLKPQASSETMDK) are disordered. Over 1–79 (MGDEAEIKEH…LSIFTIHNET (79 aa)) the chain is Cytoplasmic. Residues 80–100 (LNVWTHLIGFFLFLALTIYTA) traverse the membrane as a helical segment. The Extracellular portion of the chain corresponds to 101–191 (TKVPSVVDLH…LIFRPITRWP (91 aa)). Residues 192–212 (FYAFLGGAMFCLLASSTCHLL) form a helical membrane-spanning segment. The Cytoplasmic segment spans residues 213–228 (SCHSERVSYIMLRLDY). Residues 229 to 249 (AGIAALIATSFYPPVYYSFMC) traverse the membrane as a helical segment. At 250 to 256 (DPFFCNL) the chain is on the extracellular side. The chain crosses the membrane as a helical span at residues 257–277 (YLGFITILGIATVLVSLLPVF). Residues 278-288 (QSPEFRVVRAS) are Cytoplasmic-facing. Residues 289 to 309 (LFFGMGFSGLAPILHKLIIFW) traverse the membrane as a helical segment. Over 310–313 (DQPE) the chain is Extracellular. The helical transmembrane segment at 314 to 334 (ALHTTGYEILMGLLYGLGALV) threads the bilayer. The Cytoplasmic segment spans residues 335–356 (YATRIPERWMPGKFDIAGHSHQ). A helical transmembrane segment spans residues 357 to 377 (LFHVLVVAGAFTHYRAGLVYL).

It belongs to the ADIPOR family. As to expression, expressed in roots, leaves, stems and flowers.

Its subcellular location is the membrane. Its function is as follows. May play a role in abiotic stress response. This Arabidopsis thaliana (Mouse-ear cress) protein is Heptahelical transmembrane protein 4 (HHP4).